We begin with the raw amino-acid sequence, 635 residues long: Threonine--tRNA ligase (635 aa).

Positions 1-152 are editing domain; that stretch reads MQLLLIHSDY…AKAAVKPEAA (152 aa). Positions 215–514 are catalytic; it reads PHVELMRRLE…TEEGKVPMLP (300 aa). Residues Cys307, His359, and His483 each coordinate Zn(2+).

The protein belongs to the class-II aminoacyl-tRNA synthetase family. In terms of assembly, homodimer. Zn(2+) serves as cofactor.

It is found in the cytoplasm. It catalyses the reaction tRNA(Thr) + L-threonine + ATP = L-threonyl-tRNA(Thr) + AMP + diphosphate + H(+). Its function is as follows. Catalyzes the attachment of threonine to tRNA(Thr) in a two-step reaction: L-threonine is first activated by ATP to form Thr-AMP and then transferred to the acceptor end of tRNA(Thr). Also edits incorrectly charged L-seryl-tRNA(Thr). In Methanosarcina acetivorans (strain ATCC 35395 / DSM 2834 / JCM 12185 / C2A), this protein is Threonine--tRNA ligase.